A 213-amino-acid chain; its full sequence is MGGTFDPIHNGHLVAASEVADLFDLDEVVFVPTGEPWQKHHRRVSAAEDRYLMTVIATASNPRFSVSRVDIDRGGPTYTKDTLRDLRDLNTDADLYFITGADALGSILSWQNWEDMFSMAKFVGVSRPGYELDGKHILDAMRELPPDALSLVEVPALAISSSDCRKRAEEQRPIWYLVPDGVVQYVAKRGLYTRKPNNGEAKDGDVKDEEAVR.

The disordered stretch occupies residues 194 to 213; the sequence is RKPNNGEAKDGDVKDEEAVR. Residues 200–213 show a composition bias toward basic and acidic residues; sequence EAKDGDVKDEEAVR.

It belongs to the NadD family.

It carries out the reaction nicotinate beta-D-ribonucleotide + ATP + H(+) = deamido-NAD(+) + diphosphate. It participates in cofactor biosynthesis; NAD(+) biosynthesis; deamido-NAD(+) from nicotinate D-ribonucleotide: step 1/1. Its function is as follows. Catalyzes the reversible adenylation of nicotinate mononucleotide (NaMN) to nicotinic acid adenine dinucleotide (NaAD). This is Probable nicotinate-nucleotide adenylyltransferase from Mycolicibacterium smegmatis (strain ATCC 700084 / mc(2)155) (Mycobacterium smegmatis).